Reading from the N-terminus, the 291-residue chain is Transcription antitermination protein NusB (291 aa).

The protein belongs to the NusB family.

In terms of biological role, involved in transcription antitermination. Required for transcription of ribosomal RNA (rRNA) genes. Binds specifically to the boxA antiterminator sequence of the ribosomal RNA (rrn) operons. This Synechococcus sp. (strain JA-2-3B'a(2-13)) (Cyanobacteria bacterium Yellowstone B-Prime) protein is Transcription antitermination protein NusB.